An 84-amino-acid chain; its full sequence is Small ribosomal subunit protein uS17 (84 aa).

Belongs to the universal ribosomal protein uS17 family. As to quaternary structure, part of the 30S ribosomal subunit.

Functionally, one of the primary rRNA binding proteins, it binds specifically to the 5'-end of 16S ribosomal RNA. In Citrobacter koseri (strain ATCC BAA-895 / CDC 4225-83 / SGSC4696), this protein is Small ribosomal subunit protein uS17.